A 211-amino-acid chain; its full sequence is Large ribosomal subunit protein uL4 (211 aa).

The disordered stretch occupies residues Arg44–Arg94.

This sequence belongs to the universal ribosomal protein uL4 family. Part of the 50S ribosomal subunit.

One of the primary rRNA binding proteins, this protein initially binds near the 5'-end of the 23S rRNA. It is important during the early stages of 50S assembly. It makes multiple contacts with different domains of the 23S rRNA in the assembled 50S subunit and ribosome. Its function is as follows. Forms part of the polypeptide exit tunnel. In Leptospira borgpetersenii serovar Hardjo-bovis (strain JB197), this protein is Large ribosomal subunit protein uL4.